We begin with the raw amino-acid sequence, 621 residues long: tRNA uridine 5-carboxymethylaminomethyl modification enzyme MnmG (621 aa).

Residue 8 to 13 (GAGHAG) coordinates FAD. 269 to 283 (GPRYCPSIEDKIHRF) serves as a coordination point for NAD(+).

This sequence belongs to the MnmG family. In terms of assembly, homodimer. Heterotetramer of two MnmE and two MnmG subunits. FAD is required as a cofactor.

It is found in the cytoplasm. Its function is as follows. NAD-binding protein involved in the addition of a carboxymethylaminomethyl (cmnm) group at the wobble position (U34) of certain tRNAs, forming tRNA-cmnm(5)s(2)U34. The sequence is that of tRNA uridine 5-carboxymethylaminomethyl modification enzyme MnmG from Chlorobium phaeovibrioides (strain DSM 265 / 1930) (Prosthecochloris vibrioformis (strain DSM 265)).